A 176-amino-acid polypeptide reads, in one-letter code: Ribosome maturation factor RimM (176 aa).

In terms of domain architecture, PRC barrel spans 102–175 (KNDYYWNDII…TDKKFILVQW (74 aa)).

The protein belongs to the RimM family. Binds ribosomal protein uS19.

It is found in the cytoplasm. Functionally, an accessory protein needed during the final step in the assembly of 30S ribosomal subunit, possibly for assembly of the head region. Essential for efficient processing of 16S rRNA. May be needed both before and after RbfA during the maturation of 16S rRNA. It has affinity for free ribosomal 30S subunits but not for 70S ribosomes. This chain is Ribosome maturation factor RimM, found in Buchnera aphidicola subsp. Acyrthosiphon pisum (strain APS) (Acyrthosiphon pisum symbiotic bacterium).